The following is a 103-amino-acid chain: Enhancer of rudimentary homolog (103 aa).

Belongs to the E(R) family. In terms of assembly, homodimer.

May have a role in the cell cycle. This Caenorhabditis elegans protein is Enhancer of rudimentary homolog.